We begin with the raw amino-acid sequence, 739 residues long: Catalase-peroxidase (739 aa).

The interval 1-20 is disordered; the sequence is MGSNECPYSRQNANIGGGGQ. The segment at residues 94 to 217 is a cross-link (tryptophyl-tyrosyl-methioninium (Trp-Tyr) (with M-243)); that stretch reads WHSAGTYRVF…LAASHMGLIY (124 aa). Residue His-95 is the Proton acceptor of the active site. The segment at residues 217–243 is a cross-link (tryptophyl-tyrosyl-methioninium (Tyr-Met) (with W-94)); it reads YVNPEGPNKNPDPVLAAKDIRITFGRM. His-258 contributes to the heme b binding site.

The protein belongs to the peroxidase family. Peroxidase/catalase subfamily. In terms of assembly, homodimer or homotetramer. The cofactor is heme b. Post-translationally, formation of the three residue Trp-Tyr-Met cross-link is important for the catalase, but not the peroxidase activity of the enzyme.

Its subcellular location is the cytoplasm. It catalyses the reaction H2O2 + AH2 = A + 2 H2O. It carries out the reaction 2 H2O2 = O2 + 2 H2O. Its function is as follows. Bifunctional enzyme with both catalase and broad-spectrum peroxidase activity. This Emericella nidulans (strain FGSC A4 / ATCC 38163 / CBS 112.46 / NRRL 194 / M139) (Aspergillus nidulans) protein is Catalase-peroxidase.